The primary structure comprises 342 residues: Farnesyl pyrophosphate synthase 1 (342 aa).

Isopentenyl diphosphate-binding residues include lysine 47, arginine 50, and glutamine 86. Aspartate 93 and aspartate 97 together coordinate Mg(2+). A dimethylallyl diphosphate-binding site is contributed by arginine 102. Arginine 103 is an isopentenyl diphosphate binding site. The dimethylallyl diphosphate site is built by lysine 190, threonine 191, glutamine 229, lysine 246, and lysine 255.

The protein belongs to the FPP/GGPP synthase family. It depends on Mg(2+) as a cofactor.

The protein localises to the cytoplasm. It carries out the reaction isopentenyl diphosphate + dimethylallyl diphosphate = (2E)-geranyl diphosphate + diphosphate. The catalysed reaction is isopentenyl diphosphate + (2E)-geranyl diphosphate = (2E,6E)-farnesyl diphosphate + diphosphate. Its pathway is isoprenoid biosynthesis; farnesyl diphosphate biosynthesis; farnesyl diphosphate from geranyl diphosphate and isopentenyl diphosphate: step 1/1. The protein operates within isoprenoid biosynthesis; geranyl diphosphate biosynthesis; geranyl diphosphate from dimethylallyl diphosphate and isopentenyl diphosphate: step 1/1. In terms of biological role, catalyzes the sequential condensation of isopentenyl pyrophosphate with the allylic pyrophosphates, dimethylallyl pyrophosphate, and then with the resultant geranylpyrophosphate to the ultimate product farnesyl pyrophosphate. The protein is Farnesyl pyrophosphate synthase 1 (FPS1) of Lupinus albus (White lupine).